Here is a 531-residue protein sequence, read N- to C-terminus: Aspartate--tRNA ligase, cytoplasmic (531 aa).

Residues 1–45 form a disordered region; sequence MADAAEGEQPKLSKKELNKLARKAKKDEKAGEKGGNQQQAAAMDQ. Over residues 8–32 the composition is skewed to basic and acidic residues; that stretch reads EQPKLSKKELNKLARKAKKDEKAGE. Glutamate 259 is a binding site for L-aspartate. The segment at 281-284 is aspartate; it reads QLYK. Position 303 (arginine 303) interacts with L-aspartate. ATP-binding positions include 303–305, 311–313, and glutamate 454; these read RAE and RHM. Serine 457 and arginine 461 together coordinate L-aspartate. 502-505 contributes to the ATP binding site; sequence GLER.

This sequence belongs to the class-II aminoacyl-tRNA synthetase family. Type 2 subfamily. In terms of assembly, homodimer.

The protein localises to the cytoplasm. It catalyses the reaction tRNA(Asp) + L-aspartate + ATP = L-aspartyl-tRNA(Asp) + AMP + diphosphate. The sequence is that of Aspartate--tRNA ligase, cytoplasmic from Caenorhabditis elegans.